The primary structure comprises 439 residues: Homogentisate 1,2-dioxygenase (439 aa).

The active-site Proton acceptor is His293. Fe cation is bound by residues His336 and Glu342. 2 residues coordinate homogentisate: Tyr351 and His372. Residue His372 participates in Fe cation binding.

It belongs to the homogentisate dioxygenase family. In terms of assembly, hexamer; dimer of trimers. Fe cation is required as a cofactor.

The catalysed reaction is homogentisate + O2 = 4-maleylacetoacetate + H(+). The protein operates within amino-acid degradation; L-phenylalanine degradation; acetoacetate and fumarate from L-phenylalanine: step 4/6. Involved in the catabolism of homogentisate (2,5-dihydroxyphenylacetate or 2,5-OH-PhAc), a central intermediate in the degradation of phenylalanine and tyrosine. Catalyzes the oxidative ring cleavage of the aromatic ring of homogentisate to yield maleylacetoacetate. This chain is Homogentisate 1,2-dioxygenase, found in Cupriavidus pinatubonensis (strain JMP 134 / LMG 1197) (Cupriavidus necator (strain JMP 134)).